A 468-amino-acid polypeptide reads, in one-letter code: ATP synthase subunit beta (468 aa).

155-162 contributes to the ATP binding site; that stretch reads GGAGVGKT.

The protein belongs to the ATPase alpha/beta chains family. F-type ATPases have 2 components, CF(1) - the catalytic core - and CF(0) - the membrane proton channel. CF(1) has five subunits: alpha(3), beta(3), gamma(1), delta(1), epsilon(1). CF(0) has three main subunits: a(1), b(2) and c(9-12). The alpha and beta chains form an alternating ring which encloses part of the gamma chain. CF(1) is attached to CF(0) by a central stalk formed by the gamma and epsilon chains, while a peripheral stalk is formed by the delta and b chains.

The protein localises to the cell membrane. The enzyme catalyses ATP + H2O + 4 H(+)(in) = ADP + phosphate + 5 H(+)(out). Produces ATP from ADP in the presence of a proton gradient across the membrane. The catalytic sites are hosted primarily by the beta subunits. The chain is ATP synthase subunit beta from Bacillus cereus (strain G9842).